Consider the following 617-residue polypeptide: Manganese lipoxygenase (617 aa).

Residues 1 to 17 form the signal peptide; the sequence is MRIGLLAFAVAARYVEA. The span at 23-48 shows a compositional bias: low complexity; it reads GEEVASSSAPTTLPSTSSSSALPSPT. A disordered region spans residues 23-59; it reads GEEVASSSAPTTLPSTSSSSALPSPTKYTLPHEDPNP. Residues N109, N119, and N160 are each glycosylated (N-linked (GlcNAc...) asparagine). The Lipoxygenase domain maps to 122 to 617; that stretch reads LRDIQSHGGL…PAVNPFFLSI (496 aa). Residues H293, H297, H479, and N483 each coordinate Mn(2+). N-linked (GlcNAc...) asparagine glycosylation occurs at N547. I617 contributes to the Mn(2+) binding site.

The protein belongs to the lipoxygenase family. Manganese lipoxygenase subfamily. Requires Mn(2+) as cofactor.

It localises to the secreted. The enzyme catalyses (9Z,12Z)-octadecadienoate + O2 = (9S)-hydroperoxy-(10E,12Z)-octadecadienoate. It carries out the reaction (9Z,12Z)-octadecadienoate + O2 = (11S)-hydroperoxy-(9Z,12Z)-octadecadienoate. The catalysed reaction is (9Z,12Z)-octadecadienoate + O2 = (13R)-hydroperoxy-(9Z,11E)-octadecadienoate. It catalyses the reaction (9Z,12Z,15Z)-octadecatrienoate + O2 = (9S)-hydroperoxy-(10E,12Z,15Z)-octadecatrienoate. The enzyme catalyses (9Z,12Z,15Z)-octadecatrienoate + O2 = (11R)-hydroperoxy-(9Z,12Z,15Z)-octadecatrienoate. It carries out the reaction (9Z,12Z,15Z)-octadecatrienoate + O2 = (13R)-hydroperoxy-(9Z,11E,15Z)-octadecatrienoate. In terms of biological role, lipoxygenase that metabolizes linoleic and alpha-linolenic acids to 9S-, 11- and 13R-hydroperoxy fatty acids. At the end of lipoxygenation, the intermediate products 11S-HPODE and 13R-HPODE from linoleic acid are then transformed into 9S-HPODE as the final product. The intermediate product 11R-HPOTrE from alpha-linolenic acid is transformed into 9S-HPOTrE and 13R-HPOTrE as the final products. 9S-HPOTrE is further oxidized by the enzyme to 9,16-DiHOTrE as the end product. Also acts on gamma-linolenic acid producing 9-HOTrE(n-6) as the main metabolite. The sequence is that of Manganese lipoxygenase from Nakataea oryzae (Rice stem rot fungus).